The primary structure comprises 377 residues: Chaperone protein DnaJ (377 aa).

Residues 5–69 (DYYEVLGISK…QKRAQYDQYG (65 aa)) form the J domain. The CR-type zinc-finger motif lies at 134–216 (GKDAEIEIPR…CHGKGRVTKT (83 aa)). Residues cysteine 147, cysteine 150, cysteine 164, cysteine 167, cysteine 190, cysteine 193, cysteine 204, and cysteine 207 each contribute to the Zn(2+) site. CXXCXGXG motif repeat units lie at residues 147–154 (CDTCHGSG), 164–171 (CSHCGGKG), 190–197 (CQYCNGTG), and 204–211 (CPTCHGKG).

Belongs to the DnaJ family. Homodimer. Zn(2+) serves as cofactor.

It is found in the cytoplasm. Its function is as follows. Participates actively in the response to hyperosmotic and heat shock by preventing the aggregation of stress-denatured proteins and by disaggregating proteins, also in an autonomous, DnaK-independent fashion. Unfolded proteins bind initially to DnaJ; upon interaction with the DnaJ-bound protein, DnaK hydrolyzes its bound ATP, resulting in the formation of a stable complex. GrpE releases ADP from DnaK; ATP binding to DnaK triggers the release of the substrate protein, thus completing the reaction cycle. Several rounds of ATP-dependent interactions between DnaJ, DnaK and GrpE are required for fully efficient folding. Also involved, together with DnaK and GrpE, in the DNA replication of plasmids through activation of initiation proteins. This chain is Chaperone protein DnaJ, found in Listeria monocytogenes serotype 1/2a (strain 10403S).